Consider the following 128-residue polypeptide: MQKRVRNRLITIIICFCSAFLGISIILYNLEKNIVFFLPPSKINEIEQGKELRVGGLVKTDSINKIADDKISFVITDNIKDCEILYQGALPALFRKGQGIIAIGQLSNGKFIARQLLAKHDENYRPPQ.

Residues 1 to 8 lie on the Cytoplasmic side of the membrane; it reads MQKRVRNR. The helical; Signal-anchor for type II membrane protein transmembrane segment at 9 to 29 threads the bilayer; sequence LITIIICFCSAFLGISIILYN. The Periplasmic segment spans residues 30–128; it reads LEKNIVFFLP…KHDENYRPPQ (99 aa). 2 residues coordinate heme: histidine 120 and tyrosine 124.

Belongs to the CcmE/CycJ family.

Its subcellular location is the cell inner membrane. Heme chaperone required for the biogenesis of c-type cytochromes. Transiently binds heme delivered by CcmC and transfers the heme to apo-cytochromes in a process facilitated by CcmF and CcmH. This chain is Cytochrome c-type biogenesis protein CcmE, found in Rickettsia rickettsii (strain Iowa).